The following is a 367-amino-acid chain: Quinolinate synthase (367 aa).

Iminosuccinate contacts are provided by H45 and S62. A [4Fe-4S] cluster-binding site is contributed by C109. Iminosuccinate contacts are provided by residues 140–142 (YVN) and S161. Residue C229 participates in [4Fe-4S] cluster binding. Residues 255–257 (HPE) and T272 each bind iminosuccinate. [4Fe-4S] cluster is bound at residue C319.

This sequence belongs to the quinolinate synthase family. Type 3 subfamily. Requires [4Fe-4S] cluster as cofactor.

It localises to the cytoplasm. The enzyme catalyses iminosuccinate + dihydroxyacetone phosphate = quinolinate + phosphate + 2 H2O + H(+). Its pathway is cofactor biosynthesis; NAD(+) biosynthesis; quinolinate from iminoaspartate: step 1/1. Its function is as follows. Catalyzes the condensation of iminoaspartate with dihydroxyacetone phosphate to form quinolinate. The polypeptide is Quinolinate synthase (Geobacillus thermodenitrificans (strain NG80-2)).